Reading from the N-terminus, the 357-residue chain is Pre-mRNA-splicing factor RBM22 homolog (357 aa).

The C3H1-type zinc finger occupies 153-180 (RNMARVCSFWRKNSCNRGDECPYLHKEI). Residues 222 to 295 (NKICIQGISE…CNLTVHLQDN (74 aa)) form the RRM domain.

Belongs to the SLT11 family. As to quaternary structure, probable component of the spliceosome C complex.

The protein resides in the nucleus. Its function is as follows. Involved in pre-mRNA splicing. Binds RNA. The polypeptide is Pre-mRNA-splicing factor RBM22 homolog (Plasmodium falciparum (isolate 3D7)).